The chain runs to 199 residues: NAD(P)H-quinone oxidoreductase subunit 6, chloroplastic (199 aa).

The next 5 helical transmembrane spans lie at 13-33 (AILLLIESGVILGSLGVVLFT), 35-55 (IVYSAFLLGWVPVCISFLYIL), 64-84 (VQILIYVGTINVLIVFAVMLI), 96-118 (WTVGDGTALALCTSPFLSIIAAI), and 157-177 (LPFELLSIILLVAPVGAITMA).

The protein belongs to the complex I subunit 6 family. NDH is composed of at least 16 different subunits, 5 of which are encoded in the nucleus.

It is found in the plastid. The protein resides in the chloroplast thylakoid membrane. It carries out the reaction a plastoquinone + NADH + (n+1) H(+)(in) = a plastoquinol + NAD(+) + n H(+)(out). The catalysed reaction is a plastoquinone + NADPH + (n+1) H(+)(in) = a plastoquinol + NADP(+) + n H(+)(out). Its function is as follows. NDH shuttles electrons from NAD(P)H:plastoquinone, via FMN and iron-sulfur (Fe-S) centers, to quinones in the photosynthetic chain and possibly in a chloroplast respiratory chain. The immediate electron acceptor for the enzyme in this species is believed to be plastoquinone. Couples the redox reaction to proton translocation, and thus conserves the redox energy in a proton gradient. The sequence is that of NAD(P)H-quinone oxidoreductase subunit 6, chloroplastic (ndhG) from Huperzia lucidula (Shining clubmoss).